The chain runs to 343 residues: Glucokinase (343 aa).

An ATP-binding site is contributed by 18 to 23; sequence GDIGGT.

This sequence belongs to the bacterial glucokinase family.

The protein resides in the cytoplasm. The catalysed reaction is D-glucose + ATP = D-glucose 6-phosphate + ADP + H(+). The protein is Glucokinase of Brucella suis biovar 1 (strain 1330).